We begin with the raw amino-acid sequence, 1169 residues long: Rabankyrin-5 (1169 aa).

At Ala2 the chain carries N-acetylalanine. Residues Ser68–Glu130 form the BTB domain. 5 ANK repeats span residues Lys217 to Gly247, Asn255 to Met284, Ser288 to Ala317, Ala322 to Met362, and Lys366 to Leu396. Ser270 is subject to Phosphoserine. The NPF signature appears at Asn421–Phe423. ANK repeat units lie at residues Trp490–Leu519, His542–Ala572, Arg588–Asp617, Asp621–Val650, Asp654–Val683, Lys687–Cys716, Cys724–Ser753, Asp769–Ala798, Glu802–Val832, Gln836–Glu865, Lys870–Ser899, Ser905–Glu934, His938–Ala967, Asn971–Ala1001, Arg1005–Leu1037, and Asp1043–Val1072. Residues Val650–Ala759 are interaction with RHOD and RAB5A. The FYVE-type zinc finger occupies Trp1104 to Thr1164. Residues Cys1110, Cys1113, Cys1126, Cys1129, Cys1134, Cys1137, Cys1156, and Cys1159 each contribute to the Zn(2+) site.

In terms of assembly, interacts with RAB5A (in GTP-bound form). Interacts with RHOD (independent of GTP-loaded status). Interacts with EHD1. Interacts with VPS26A; the interaction is independent of EHD1 and is indicative for an association with the cargo recognition subcomplex of the retromer complex. High expression in whole adult brain and intermediate expression in all other tissues and specific brain regions examined, including fetal brain.

It is found in the cytoplasm. The protein resides in the endosome membrane. Its subcellular location is the early endosome. Functionally, proposed effector of Rab5. Binds to phosphatidylinositol 3-phosphate (PI(3)P). Involved in homotypic early endosome fusion and to a lesser extent in heterotypic fusion of chlathrin-coated vesicles with early endosomes. Involved in macropinocytosis; the function is dependent on Rab5-GTP. Required for correct endosomal localization. Involved in the internalization and trafficking of activated tyrosine kinase receptors such as PDGFRB. Regulates the subcellular localization of the retromer complex in a EHD1-dependent manner. Involved in endosome-to-Golgi transport and biosynthetic transport to late endosomes and lysosomes indicative for a regulation of retromer complex-mediated retrograde transport. This is Rabankyrin-5 (ANKFY1) from Homo sapiens (Human).